The primary structure comprises 254 residues: Thiazole synthase (254 aa).

The Schiff-base intermediate with DXP role is filled by Lys-93. Residues Gly-154, 181 to 182, and 203 to 204 contribute to the 1-deoxy-D-xylulose 5-phosphate site; these read AG and NT.

This sequence belongs to the ThiG family. In terms of assembly, homotetramer. Forms heterodimers with either ThiH or ThiS.

It localises to the cytoplasm. The catalysed reaction is [ThiS sulfur-carrier protein]-C-terminal-Gly-aminoethanethioate + 2-iminoacetate + 1-deoxy-D-xylulose 5-phosphate = [ThiS sulfur-carrier protein]-C-terminal Gly-Gly + 2-[(2R,5Z)-2-carboxy-4-methylthiazol-5(2H)-ylidene]ethyl phosphate + 2 H2O + H(+). It functions in the pathway cofactor biosynthesis; thiamine diphosphate biosynthesis. Functionally, catalyzes the rearrangement of 1-deoxy-D-xylulose 5-phosphate (DXP) to produce the thiazole phosphate moiety of thiamine. Sulfur is provided by the thiocarboxylate moiety of the carrier protein ThiS. In vitro, sulfur can be provided by H(2)S. The polypeptide is Thiazole synthase (Ruegeria pomeroyi (strain ATCC 700808 / DSM 15171 / DSS-3) (Silicibacter pomeroyi)).